The chain runs to 333 residues: tRNA N6-adenosine threonylcarbamoyltransferase (333 aa).

Positions 111 and 115 each coordinate Fe cation. Substrate contacts are provided by residues 134–138 (LVSGG), Asp-167, Gly-180, and Asn-272. Asp-300 is a binding site for Fe cation.

The protein belongs to the KAE1 / TsaD family. It depends on Fe(2+) as a cofactor.

The protein resides in the cytoplasm. It carries out the reaction L-threonylcarbamoyladenylate + adenosine(37) in tRNA = N(6)-L-threonylcarbamoyladenosine(37) in tRNA + AMP + H(+). In terms of biological role, required for the formation of a threonylcarbamoyl group on adenosine at position 37 (t(6)A37) in tRNAs that read codons beginning with adenine. Is involved in the transfer of the threonylcarbamoyl moiety of threonylcarbamoyl-AMP (TC-AMP) to the N6 group of A37, together with TsaE and TsaB. TsaD likely plays a direct catalytic role in this reaction. In Legionella pneumophila (strain Corby), this protein is tRNA N6-adenosine threonylcarbamoyltransferase.